The primary structure comprises 213 residues: Adenylate kinase (213 aa).

10–15 (GCGKGT) provides a ligand contact to ATP. Positions 30-59 (STGDLMRKEISLNTTLGLKCQEYMNAGKYV) are NMP. AMP contacts are provided by residues threonine 31, arginine 36, 57–59 (KYV), 83–86 (GYPR), and glutamine 90. The tract at residues 124–161 (NRLVCPLCKASFNLETRKPKQEGLCDFDNTKLVKRSDD) is LID. Arginine 125 contacts ATP. 2 residues coordinate Zn(2+): cysteine 128 and cysteine 131. 134-135 (SF) is a binding site for ATP. Cysteine 148 and aspartate 151 together coordinate Zn(2+). Positions 158 and 169 each coordinate AMP. Asparagine 197 provides a ligand contact to ATP.

This sequence belongs to the adenylate kinase family. As to quaternary structure, monomer.

The protein resides in the cytoplasm. The catalysed reaction is AMP + ATP = 2 ADP. Its pathway is purine metabolism; AMP biosynthesis via salvage pathway; AMP from ADP: step 1/1. Catalyzes the reversible transfer of the terminal phosphate group between ATP and AMP. Plays an important role in cellular energy homeostasis and in adenine nucleotide metabolism. The sequence is that of Adenylate kinase from Mycoplasma capricolum subsp. capricolum (strain California kid / ATCC 27343 / NCTC 10154).